The primary structure comprises 394 residues: Chorismate synthase (394 aa).

R48 serves as a coordination point for NADP(+). Residues 52-90 (QSMITTSRGEPDEVSIQSGLQDGYTTGTPIGMTIENKDA) are disordered. The span at 66–79 (SIQSGLQDGYTTGT) shows a compositional bias: polar residues. FMN is bound by residues 125-127 (RSS), G297, 312-316 (HAPTS), and R339.

The protein belongs to the chorismate synthase family. FMNH2 is required as a cofactor.

It catalyses the reaction 5-O-(1-carboxyvinyl)-3-phosphoshikimate = chorismate + phosphate. It functions in the pathway metabolic intermediate biosynthesis; chorismate biosynthesis; chorismate from D-erythrose 4-phosphate and phosphoenolpyruvate: step 7/7. Functionally, catalyzes the anti-1,4-elimination of the C-3 phosphate and the C-6 proR hydrogen from 5-enolpyruvylshikimate-3-phosphate (EPSP) to yield chorismate, which is the branch point compound that serves as the starting substrate for the three terminal pathways of aromatic amino acid biosynthesis. This reaction introduces a second double bond into the aromatic ring system. This Halobacterium salinarum (strain ATCC 700922 / JCM 11081 / NRC-1) (Halobacterium halobium) protein is Chorismate synthase.